The following is a 612-amino-acid chain: Apoptosis-inducing factor 1, mitochondrial (612 aa).

Short sequence motifs (mitochondrial localization signal) lie at residues 1-30 (MFRC…PKQR) and 62-88 (KMDN…KTIK). The N-terminal 53 residues, 1-53 (MFRCGGLAGAFKQKLVPLVRSVCVQRPKQRNRLPGNLFQQWRVPLELQMARQM), are a transit peptide targeting the mitochondrion. 2 consecutive propeptides (removed in mature form) follow at residues 54–100 (ASSG…RIMG) and 55–101 (SSGP…IMGL). N6-succinyllysine is present on Lys-108. Ser-115 carries the phosphoserine modification. Residues 133–482 (FLLIGGGTAA…KPYWHQSMFW (350 aa)) are FAD-dependent oxidoreductase. FAD is bound by residues 137-141 (GGGTA), 163-164 (ED), Arg-171, and Lys-176. Residue Trp-195 coordinates NAD(+). Val-232 provides a ligand contact to FAD. Lys-254 participates in a covalent cross-link: Glycyl lysine isopeptide (Lys-Gly) (interchain with G-Cter in ubiquitin). The residue at position 267 (Ser-267) is a Phosphoserine. Arg-284 provides a ligand contact to FAD. NAD(+) contacts are provided by residues 307 to 310 (GGFL), Glu-335, and Lys-341. The residue at position 370 (Ser-370) is a Phosphoserine. Lys-387 carries the N6-acetyllysine modification. An NAD(+)-binding site is contributed by Gly-398. Asp-437 serves as a coordination point for FAD. Positions 445-450 (KLGRRR) match the Nuclear localization signal motif. Residues 452–453 (EH), Trp-482, and Glu-492 each bind NAD(+). FAD is bound by residues 453-454 (HH) and Trp-482. The segment covering 512 to 528 (AQDNPKSATEQSGTGIR) has biased composition (polar residues). Positions 512 to 551 (AQDNPKSATEQSGTGIRSESETESEASEITIPPSDPAVPQ) are disordered. Phosphothreonine is present on Thr-520. Residues Ser-523 and Ser-529 each carry the phosphoserine modification. Asn-582 contributes to the NAD(+) binding site. Residue Lys-592 is modified to N6-acetyllysine.

This sequence belongs to the FAD-dependent oxidoreductase family. Monomer (oxidized form). Homodimer (reduced form). Upon reduction with NADH, undergoes dimerization and forms tight, long-lived FADH2-NAD charge transfer complexes (CTC) resistant to oxidation. Also dimerizes with isoform 3 preventing its release from mitochondria. Interacts with XIAP/BIRC4. Interacts (via N-terminus) with EIF3G (via C-terminus). Interacts with PRELID1. Interacts with CHCHD4; the interaction increases in presence of NADH. Interacts with processed form of PARP1 (Poly [ADP-ribose] polymerase 1, processed C-terminus); interaction is mediated with poly-ADP-ribose chains attached to PARP1, promoting translocation into the nucleus. FAD is required as a cofactor. Under normal conditions, a 54-residue N-terminal segment is first proteolytically removed during or just after translocation into the mitochondrial intermembrane space (IMS) by the mitochondrial processing peptidase (MPP) to form the inner-membrane-anchored mature form (AIFmit). During apoptosis, it is further proteolytically processed at amino-acid position 101 leading to the generation of the mature form, which is confined to the mitochondrial IMS in a soluble form (AIFsol). AIFsol is released to the cytoplasm in response to specific death signals, and translocated to the nucleus, where it induces nuclear apoptosis in a caspase-independent manner. Post-translationally, ubiquitination by XIAP/BIRC4 does not lead to proteasomal degradation. Ubiquitination at Lys-254 by XIAP/BIRC4 blocks its ability to bind DNA and induce chromatin degradation, thereby inhibiting its ability to induce cell death.

The protein localises to the mitochondrion intermembrane space. Its subcellular location is the mitochondrion inner membrane. It is found in the cytoplasm. It localises to the nucleus. The protein resides in the perinuclear region. The enzyme catalyses A + NADH + H(+) = AH2 + NAD(+). In terms of biological role, functions both as NADH oxidoreductase and as regulator of apoptosis. In response to apoptotic stimuli, it is released from the mitochondrion intermembrane space into the cytosol and to the nucleus, where it functions as a proapoptotic factor in a caspase-independent pathway. Release into the cytoplasm is mediated upon binding to poly-ADP-ribose chains. The soluble form (AIFsol) found in the nucleus induces 'parthanatos' i.e. caspase-independent fragmentation of chromosomal DNA. Binds to DNA in a sequence-independent manner. Interacts with EIF3G, and thereby inhibits the EIF3 machinery and protein synthesis, and activates caspase-7 to amplify apoptosis. Plays a critical role in caspase-independent, pyknotic cell death in hydrogen peroxide-exposed cells. In contrast, participates in normal mitochondrial metabolism. Plays an important role in the regulation of respiratory chain biogenesis by interacting with CHCHD4 and controlling CHCHD4 mitochondrial import. The polypeptide is Apoptosis-inducing factor 1, mitochondrial (Aifm1) (Rattus norvegicus (Rat)).